The sequence spans 392 residues: Cytochrome b (392 aa).

4 helical membrane passes run 38-58 (FGSL…FLAM), 82-104 (WLLR…LHIF), 119-139 (VRCL…TGYV), and 185-205 (FFSL…LHLA). 2 residues coordinate heme b: His-88 and His-102. Residues His-189 and His-203 each contribute to the heme b site. His-208 provides a ligand contact to a ubiquinone. 4 helical membrane passes run 231–251 (FYVK…IWIF), 295–315 (SGGV…PFFK), 327–347 (IHQG…WIGC), and 354–373 (FVTI…AITP).

It belongs to the cytochrome b family. The main subunits of complex b-c1 are: cytochrome b, cytochrome c1 and the Rieske protein. Requires heme b as cofactor.

Its subcellular location is the mitochondrion inner membrane. Its function is as follows. Component of the ubiquinol-cytochrome c reductase complex (complex III or cytochrome b-c1 complex) that is part of the mitochondrial respiratory chain. The b-c1 complex mediates electron transfer from ubiquinol to cytochrome c. Contributes to the generation of a proton gradient across the mitochondrial membrane that is then used for ATP synthesis. This is Cytochrome b (MT-CYB) from Pisum sativum (Garden pea).